A 568-amino-acid chain; its full sequence is Probable WRKY transcription factor 34 (568 aa).

Residues 172–236 (ACCAPADDGY…YTGDHIHSKP (65 aa)) constitute a DNA-binding region (WRKY 1). C203, C208, H231, and H233 together coordinate Zn(2+). 2 disordered regions span residues 230–252 (DHIH…TGQD) and 337–360 (KRRK…EPRV). A DNA-binding region (WRKY 2) is located at residues 366–431 (SDIDILDDGY…YIGKHTHVVP (66 aa)). C397, C402, H426, and H428 together coordinate Zn(2+).

The protein belongs to the WRKY group I family.

Its subcellular location is the nucleus. Functionally, transcription factor. Interacts specifically with the W box (5'-(T)TGAC[CT]-3'), a frequently occurring elicitor-responsive cis-acting element. The protein is Probable WRKY transcription factor 34 (WRKY34) of Arabidopsis thaliana (Mouse-ear cress).